Consider the following 156-residue polypeptide: MGRSISVSFGLLVVFLSLSGTGADQDCLPGWSSHEGHCYKVFNLNKTWEDAKKFCTEQANSGHLVSIDSKKEANFVAELVSQNIKETRRTDFVWIGLRAEDKRQHCSSEWSDGSSINYQNWIEAESKKCLGLEKQTRYRKWVNLNCGQPYRFTCEI.

A signal peptide spans M1–A23. Cysteines 27 and 38 form a disulfide. The C-type lectin domain occupies H34–E155. A glycan (N-linked (GlcNAc...) asparagine) is linked at N45. Cystine bridges form between C55–C154 and C129–C146.

Belongs to the snaclec family. As to quaternary structure, heterodimer; disulfide-linked. Expressed by the venom gland.

It localises to the secreted. In terms of biological role, interferes with one step of hemostasis (modulation of platelet aggregation, or coagulation cascade, for example). In Macrovipera lebetinus (Levantine viper), this protein is Snaclec A4.